A 268-amino-acid chain; its full sequence is 4-hydroxy-tetrahydrodipicolinate reductase (268 aa).

NAD(+) is bound by residues 10-15 (GSTGRM), E36, 99-101 (GTT), and 123-126 (APNM). H156 functions as the Proton donor/acceptor in the catalytic mechanism. H157 contributes to the (S)-2,3,4,5-tetrahydrodipicolinate binding site. K160 acts as the Proton donor in catalysis. 166–167 (GT) is a (S)-2,3,4,5-tetrahydrodipicolinate binding site.

This sequence belongs to the DapB family.

It localises to the cytoplasm. It catalyses the reaction (S)-2,3,4,5-tetrahydrodipicolinate + NAD(+) + H2O = (2S,4S)-4-hydroxy-2,3,4,5-tetrahydrodipicolinate + NADH + H(+). The catalysed reaction is (S)-2,3,4,5-tetrahydrodipicolinate + NADP(+) + H2O = (2S,4S)-4-hydroxy-2,3,4,5-tetrahydrodipicolinate + NADPH + H(+). It participates in amino-acid biosynthesis; L-lysine biosynthesis via DAP pathway; (S)-tetrahydrodipicolinate from L-aspartate: step 4/4. In terms of biological role, catalyzes the conversion of 4-hydroxy-tetrahydrodipicolinate (HTPA) to tetrahydrodipicolinate. This chain is 4-hydroxy-tetrahydrodipicolinate reductase, found in Nitrosomonas eutropha (strain DSM 101675 / C91 / Nm57).